The primary structure comprises 481 residues: Phosphoglucosamine mutase (481 aa).

Serine 129 acts as the Phosphoserine intermediate in catalysis. Mg(2+)-binding residues include serine 129, aspartate 271, aspartate 273, and aspartate 275. At serine 129 the chain carries Phosphoserine.

Belongs to the phosphohexose mutase family. Mg(2+) serves as cofactor. Post-translationally, activated by phosphorylation.

It catalyses the reaction alpha-D-glucosamine 1-phosphate = D-glucosamine 6-phosphate. Its function is as follows. Catalyzes the conversion of glucosamine-6-phosphate to glucosamine-1-phosphate. The sequence is that of Phosphoglucosamine mutase from Picosynechococcus sp. (strain ATCC 27264 / PCC 7002 / PR-6) (Agmenellum quadruplicatum).